An 832-amino-acid chain; its full sequence is Protein P (832 aa).

Residues 1–177 (MPLSYQHFRR…FCGSPYSWEQ (177 aa)) are terminal protein domain (TP). The segment at 178–335 (DLQHGAESIH…YCLSLIVNLL (158 aa)) is spacer. 2 disordered regions span residues 186–218 (IHQQ…QSQQ) and 239–266 (TARR…SCLY). The tract at residues 336–679 (EDWGPCDEYG…YLNLYPVARQ (344 aa)) is polymerase/reverse transcriptase domain (RT). The 244-residue stretch at 346 to 589 (EHHIRIPRTP…YSLHFMGYVI (244 aa)) folds into the Reverse transcriptase domain. Mg(2+)-binding residues include aspartate 418, aspartate 540, and aspartate 541.

The protein belongs to the hepadnaviridae P protein family.

The catalysed reaction is DNA(n) + a 2'-deoxyribonucleoside 5'-triphosphate = DNA(n+1) + diphosphate. The enzyme catalyses Endonucleolytic cleavage to 5'-phosphomonoester.. Its activity is regulated as follows. Activated by host HSP70 and HSP40 in vitro to be able to bind the epsilon loop of the pgRNA. Because deletion of the RNase H region renders the protein partly chaperone-independent, the chaperones may be needed indirectly to relieve occlusion of the RNA-binding site by this domain. Inhibited by several reverse-transcriptase inhibitors: Lamivudine, Adefovir and Entecavir. Multifunctional enzyme that converts the viral RNA genome into dsDNA in viral cytoplasmic capsids. This enzyme displays a DNA polymerase activity that can copy either DNA or RNA templates, and a ribonuclease H (RNase H) activity that cleaves the RNA strand of RNA-DNA heteroduplexes in a partially processive 3'- to 5'-endonucleasic mode. Neo-synthesized pregenomic RNA (pgRNA) are encapsidated together with the P protein, and reverse-transcribed inside the nucleocapsid. Initiation of reverse-transcription occurs first by binding the epsilon loop on the pgRNA genome, and is initiated by protein priming, thereby the 5'-end of (-)DNA is covalently linked to P protein. Partial (+)DNA is synthesized from the (-)DNA template and generates the relaxed circular DNA (RC-DNA) genome. After budding and infection, the RC-DNA migrates in the nucleus, and is converted into a plasmid-like covalently closed circular DNA (cccDNA). The activity of P protein does not seem to be necessary for cccDNA generation, and is presumably released from (+)DNA by host nuclear DNA repair machinery. The chain is Protein P from Homo sapiens (Human).